The primary structure comprises 235 residues: MICOS complex subunit MIC25 (235 aa).

G2 carries the N-myristoyl glycine lipid modification. Phosphoserine occurs at positions 13 and 31. Disordered stretches follow at residues 31–90 (SENV…VKRY) and 106–132 (KRER…HEEQ). Residues 129–176 (HEEQKSVRLARELESREAELRRRDTFYKEQLERIERKNAEMYKLSSEQ) are a coiled coil. The CHCH domain maps to 194 to 235 (EPVCSGLQAQILHCYRDRPHEVLLCSDLVKAYQRCVSAAHKG). 2 consecutive short sequence motifs (cx9C motif) follow at residues 197-207 (CSGLQAQILHC) and 218-228 (CSDLVKAYQRC). 2 disulfides stabilise this stretch: C197–C228 and C207–C218.

The protein belongs to the MICOS complex subunit Mic19 family. Metazoan Mic25 subfamily. Component of the mitochondrial contact site and cristae organizing system (MICOS) complex, composed of at least MICOS10/MIC10, CHCHD3/MIC19, CHCHD6/MIC25, APOOL/MIC27, IMMT/MIC60, APOO/MIC23/MIC26 and MICOS13/MIC13. This complex was also known under the names MINOS or MitOS complex. The MICOS complex associates with mitochondrial outer membrane proteins SAMM50, MTX1 and MTX2 (together described as components of the mitochondrial outer membrane sorting assembly machinery (SAM) complex) and DNAJC11, mitochondrial inner membrane protein TMEM11 and with HSPA9. The MICOS and SAM complexes together with DNAJC11 are part of a large protein complex spanning both membranes termed the mitochondrial intermembrane space bridging (MIB) complex. Interacts with DISC1. Interacts with DISC1. Interacts with IMMT/MIC60. In terms of assembly, (Microbial infection) Interacts with human cytomegalovirus protein UL37 isoform vMIA; this interaction rewires mitochondria by engaging the conserved MICOS complex.

The protein localises to the mitochondrion inner membrane. The protein resides in the mitochondrion. Functionally, component of the MICOS complex, a large protein complex of the mitochondrial inner membrane that plays crucial roles in the maintenance of crista junctions, inner membrane architecture, and formation of contact sites to the outer membrane. The chain is MICOS complex subunit MIC25 (CHCHD6) from Homo sapiens (Human).